We begin with the raw amino-acid sequence, 723 residues long: Polyribonucleotide nucleotidyltransferase (723 aa).

Mg(2+)-binding residues include aspartate 488 and aspartate 494. The KH domain maps to 555–614; sequence PRMITMKIHPDKIREVIGKGGSTIQALTKETGTTIDIQEDGTITIASTSTEGMAEAKRRI. An S1 motif domain is found at 624–692; that stretch reads GKIYAGTVLK…EKGRLRLSLK (69 aa). The segment at 701-723 is disordered; that stretch reads SISPINAGESAAPAAPAGGSEQQ. Low complexity predominate over residues 707 to 723; that stretch reads AGESAAPAAPAGGSEQQ.

Belongs to the polyribonucleotide nucleotidyltransferase family. It depends on Mg(2+) as a cofactor.

It is found in the cytoplasm. The enzyme catalyses RNA(n+1) + phosphate = RNA(n) + a ribonucleoside 5'-diphosphate. Functionally, involved in mRNA degradation. Catalyzes the phosphorolysis of single-stranded polyribonucleotides processively in the 3'- to 5'-direction. The chain is Polyribonucleotide nucleotidyltransferase from Cupriavidus taiwanensis (strain DSM 17343 / BCRC 17206 / CCUG 44338 / CIP 107171 / LMG 19424 / R1) (Ralstonia taiwanensis (strain LMG 19424)).